The primary structure comprises 402 residues: Na(+)/H(+) antiporter NhaA 2 (402 aa).

Helical transmembrane passes span 18–38 (AGGI…NTAL), 63–83 (ALLW…GLEV), 99–119 (SLPL…FYGI), 129–149 (GWAI…ALLG), 158–178 (ALLL…IAIF), 182–202 (GVEL…SAFG), 210–230 (IPYI…GVHA), 258–278 (ALHS…NAGV), 296–316 (IALG…WLAV), 329–349 (WLQV…SLFI), and 365–385 (IGVL…LVLG).

This sequence belongs to the NhaA Na(+)/H(+) (TC 2.A.33) antiporter family.

The protein resides in the cell inner membrane. The catalysed reaction is Na(+)(in) + 2 H(+)(out) = Na(+)(out) + 2 H(+)(in). In terms of biological role, na(+)/H(+) antiporter that extrudes sodium in exchange for external protons. The polypeptide is Na(+)/H(+) antiporter NhaA 2 (Erythrobacter litoralis (strain HTCC2594)).